A 224-amino-acid chain; its full sequence is PKHD-type hydroxylase KPN78578_12210 (224 aa).

Residues 77-176 enclose the Fe2OG dioxygenase domain; that stretch reads TISAPLFNRY…RQASFLWIQS (100 aa). 3 residues coordinate Fe cation: His-95, Asp-97, and His-157. Residue Arg-167 coordinates 2-oxoglutarate.

It depends on Fe(2+) as a cofactor. The cofactor is L-ascorbate.

This Klebsiella pneumoniae subsp. pneumoniae (strain ATCC 700721 / MGH 78578) protein is PKHD-type hydroxylase KPN78578_12210.